We begin with the raw amino-acid sequence, 594 residues long: Arginine--tRNA ligase (594 aa).

The 'HIGH' region signature appears at 139–149; it reads ANPTGPLHVGH.

It belongs to the class-I aminoacyl-tRNA synthetase family. Monomer.

The protein localises to the cytoplasm. The catalysed reaction is tRNA(Arg) + L-arginine + ATP = L-arginyl-tRNA(Arg) + AMP + diphosphate. The sequence is that of Arginine--tRNA ligase from Burkholderia thailandensis (strain ATCC 700388 / DSM 13276 / CCUG 48851 / CIP 106301 / E264).